A 434-amino-acid polypeptide reads, in one-letter code: Histidinol dehydrogenase (434 aa).

Positions 130, 191, and 214 each coordinate NAD(+). Substrate-binding residues include S237, Q259, and H262. Zn(2+) is bound by residues Q259 and H262. Catalysis depends on proton acceptor residues E327 and H328. 4 residues coordinate substrate: H328, D361, E415, and H420. D361 contacts Zn(2+). H420 contributes to the Zn(2+) binding site.

The protein belongs to the histidinol dehydrogenase family. It depends on Zn(2+) as a cofactor.

It carries out the reaction L-histidinol + 2 NAD(+) + H2O = L-histidine + 2 NADH + 3 H(+). It functions in the pathway amino-acid biosynthesis; L-histidine biosynthesis; L-histidine from 5-phospho-alpha-D-ribose 1-diphosphate: step 9/9. Its function is as follows. Catalyzes the sequential NAD-dependent oxidations of L-histidinol to L-histidinaldehyde and then to L-histidine. The sequence is that of Histidinol dehydrogenase from Cereibacter sphaeroides (strain ATCC 17023 / DSM 158 / JCM 6121 / CCUG 31486 / LMG 2827 / NBRC 12203 / NCIMB 8253 / ATH 2.4.1.) (Rhodobacter sphaeroides).